The chain runs to 109 residues: UPF0122 protein Cbei_1174 (109 aa).

This sequence belongs to the UPF0122 family.

In terms of biological role, might take part in the signal recognition particle (SRP) pathway. This is inferred from the conservation of its genetic proximity to ftsY/ffh. May be a regulatory protein. The chain is UPF0122 protein Cbei_1174 from Clostridium beijerinckii (strain ATCC 51743 / NCIMB 8052) (Clostridium acetobutylicum).